Here is a 402-residue protein sequence, read N- to C-terminus: Acetate kinase (402 aa).

Asparagine 13 is a Mg(2+) binding site. Residue lysine 20 coordinates ATP. Arginine 94 serves as a coordination point for substrate. The active-site Proton donor/acceptor is the aspartate 151. Residues 211–215 (HLGNG), 285–287 (DFR), and 333–337 (GVGEN) contribute to the ATP site. Glutamate 387 serves as a coordination point for Mg(2+).

Belongs to the acetokinase family. In terms of assembly, homodimer. Mg(2+) is required as a cofactor. It depends on Mn(2+) as a cofactor.

The protein resides in the cytoplasm. The catalysed reaction is acetate + ATP = acetyl phosphate + ADP. It participates in metabolic intermediate biosynthesis; acetyl-CoA biosynthesis; acetyl-CoA from acetate: step 1/2. In terms of biological role, catalyzes the formation of acetyl phosphate from acetate and ATP. Can also catalyze the reverse reaction. This is Acetate kinase from Nocardia farcinica (strain IFM 10152).